The chain runs to 91 residues: Cell division topological specificity factor (91 aa).

The protein belongs to the MinE family.

In terms of biological role, prevents the cell division inhibition by proteins MinC and MinD at internal division sites while permitting inhibition at polar sites. This ensures cell division at the proper site by restricting the formation of a division septum at the midpoint of the long axis of the cell. The protein is Cell division topological specificity factor of Thermoanaerobacter pseudethanolicus (strain ATCC 33223 / 39E) (Clostridium thermohydrosulfuricum).